Consider the following 182-residue polypeptide: NADH-quinone oxidoreductase subunit I (182 aa).

4Fe-4S ferredoxin-type domains follow at residues 52–82 (LTRD…LQKA) and 92–121 (DFFR…LTPD). The [4Fe-4S] cluster site is built by Cys-62, Cys-65, Cys-68, Cys-72, Cys-101, Cys-104, Cys-107, and Cys-111.

Belongs to the complex I 23 kDa subunit family. As to quaternary structure, NDH-1 is composed of 13 different subunits. Subunits NuoA, H, J, K, L, M, N constitute the membrane sector of the complex. [4Fe-4S] cluster is required as a cofactor.

The protein localises to the cell inner membrane. It carries out the reaction a quinone + NADH + 5 H(+)(in) = a quinol + NAD(+) + 4 H(+)(out). In terms of biological role, NDH-1 shuttles electrons from NADH, via FMN and iron-sulfur (Fe-S) centers, to quinones in the respiratory chain. The immediate electron acceptor for the enzyme in this species is believed to be ubiquinone. Couples the redox reaction to proton translocation (for every two electrons transferred, four hydrogen ions are translocated across the cytoplasmic membrane), and thus conserves the redox energy in a proton gradient. This chain is NADH-quinone oxidoreductase subunit I, found in Pseudomonas syringae pv. tomato (strain ATCC BAA-871 / DC3000).